Consider the following 100-residue polypeptide: NADH-quinone oxidoreductase subunit K 2 (100 aa).

A run of 3 helical transmembrane segments spans residues 4-24 (LWWSILLGVALFVIGAGGVLL), 28-48 (ILIVLMSLELLLNSVNINFIA), and 60-80 (IFAIFVIAITAAEVAVALGIL).

Belongs to the complex I subunit 4L family. NDH-1 is composed of 14 different subunits. Subunits NuoA, H, J, K, L, M, N constitute the membrane sector of the complex.

It is found in the cell inner membrane. It catalyses the reaction a quinone + NADH + 5 H(+)(in) = a quinol + NAD(+) + 4 H(+)(out). NDH-1 shuttles electrons from NADH, via FMN and iron-sulfur (Fe-S) centers, to quinones in the respiratory chain. The immediate electron acceptor for the enzyme in this species is believed to be ubiquinone. Couples the redox reaction to proton translocation (for every two electrons transferred, four hydrogen ions are translocated across the cytoplasmic membrane), and thus conserves the redox energy in a proton gradient. The sequence is that of NADH-quinone oxidoreductase subunit K 2 from Rhizobium meliloti (strain 1021) (Ensifer meliloti).